Here is a 616-residue protein sequence, read N- to C-terminus: Chaperone protein HscA (616 aa).

This sequence belongs to the heat shock protein 70 family.

In terms of biological role, chaperone involved in the maturation of iron-sulfur cluster-containing proteins. Has a low intrinsic ATPase activity which is markedly stimulated by HscB. Involved in the maturation of IscU. The protein is Chaperone protein HscA of Photorhabdus laumondii subsp. laumondii (strain DSM 15139 / CIP 105565 / TT01) (Photorhabdus luminescens subsp. laumondii).